A 165-amino-acid chain; its full sequence is Lipoprotein signal peptidase (165 aa).

3 consecutive transmembrane segments (helical) span residues 9–29, 69–89, and 100–120; these read LLTI…VLLY, KYFL…FLFL, and FSLI…FFYN. Catalysis depends on residues aspartate 124 and aspartate 142. Residues 133–153 traverse the membrane as a helical segment; sequence WSFPTFNFADIFISLGTLIFV.

Belongs to the peptidase A8 family.

It localises to the cell inner membrane. The enzyme catalyses Release of signal peptides from bacterial membrane prolipoproteins. Hydrolyzes -Xaa-Yaa-Zaa-|-(S,diacylglyceryl)Cys-, in which Xaa is hydrophobic (preferably Leu), and Yaa (Ala or Ser) and Zaa (Gly or Ala) have small, neutral side chains.. It participates in protein modification; lipoprotein biosynthesis (signal peptide cleavage). Functionally, this protein specifically catalyzes the removal of signal peptides from prolipoproteins. This is Lipoprotein signal peptidase from Chlamydia felis (strain Fe/C-56) (Chlamydophila felis).